A 206-amino-acid polypeptide reads, in one-letter code: Ras-related protein Ral-B (206 aa).

21 to 29 (GSGGVGKSA) provides a ligand contact to GTP. The Effector region signature appears at 43 to 51 (YEPTKADSY). Residues 68–72 (DTAGQ), 128–131 (NKSD), and 158–160 (SAK) each bind GTP. Residues 181–206 (MSENKDKNGRKSGKSKKSFKERCCLL) form a disordered region. At Cys203 the chain carries Cysteine methyl ester. A lipid anchor (S-geranylgeranyl cysteine) is attached at Cys203. Positions 204–206 (CLL) are cleaved as a propeptide — removed in mature form.

Belongs to the small GTPase superfamily. Ras family. As to quaternary structure, interacts with EXOC2/Sec5 and EXOC8/Exo84. Interacts (via effector domain) with RALBP1. In terms of processing, prenylation is essential for membrane localization. Post-translationally, the farnesylated form confers resistance to the proapoptotic and anti-anchorage-dependent growth effects of some geranylgeranyltransferase I inhibitors.

It localises to the cell membrane. It is found in the midbody. It catalyses the reaction GTP + H2O = GDP + phosphate + H(+). Alternates between an inactive form bound to GDP and an active form bound to GTP. Activated by a guanine nucleotide-exchange factor (GEF) and inactivated by a GTPase-activating protein (GAP). Functionally, multifunctional GTPase involved in a variety of cellular processes including gene expression, cell migration, cell proliferation, oncogenic transformation and membrane trafficking. Accomplishes its multiple functions by interacting with distinct downstream effectors. Acts as a GTP sensor for GTP-dependent exocytosis of dense core vesicles. Required both to stabilize the assembly of the exocyst complex and to localize functional exocyst complexes to the leading edge of migrating cells. Required for suppression of apoptosis. In late stages of cytokinesis, upon completion of the bridge formation between dividing cells, mediates exocyst recruitment to the midbody to drive abscission. Involved in ligand-dependent receptor mediated endocytosis of the EGF and insulin receptors. This chain is Ras-related protein Ral-B (Ralb), found in Rattus norvegicus (Rat).